Here is a 691-residue protein sequence, read N- to C-terminus: Elongation factor G (691 aa).

In terms of domain architecture, tr-type G spans 8–283 (EDYRNFGIMA…AVVDYLPSPI (276 aa)). GTP is bound by residues 17–24 (AHIDAGKT), 81–85 (DTPGH), and 135–138 (NKMD).

It belongs to the TRAFAC class translation factor GTPase superfamily. Classic translation factor GTPase family. EF-G/EF-2 subfamily.

It is found in the cytoplasm. Functionally, catalyzes the GTP-dependent ribosomal translocation step during translation elongation. During this step, the ribosome changes from the pre-translocational (PRE) to the post-translocational (POST) state as the newly formed A-site-bound peptidyl-tRNA and P-site-bound deacylated tRNA move to the P and E sites, respectively. Catalyzes the coordinated movement of the two tRNA molecules, the mRNA and conformational changes in the ribosome. The chain is Elongation factor G from Methylocella silvestris (strain DSM 15510 / CIP 108128 / LMG 27833 / NCIMB 13906 / BL2).